Reading from the N-terminus, the 447-residue chain is Hemogen (447 aa).

The disordered stretch occupies residues 1-91 (MDLGKDQSLS…EMKVELPSQL (91 aa)). Residues 7–86 (QSLSKLHQTP…RQQNTEMKVE (80 aa)) are necessary for nuclear localization. 2 stretches are compositionally biased toward basic and acidic residues: residues 14-25 (QTPDHHQEESHV) and 35-49 (RNRE…EAQE). Residues 59–78 (EKKHKRQRTGKRSERGRKRQ) are compositionally biased toward basic residues. 2 positions are modified to phosphoserine: serine 89 and serine 122. The tract at residues 137 to 156 (QESVTLQENSSEYQATAVQN) is disordered. Serine 200 is modified (phosphoserine). 2 disordered regions span residues 210 to 280 (AKVL…MAVP) and 306 to 337 (AMSK…PGSE). Threonine 217 carries the phosphothreonine modification. Over residues 306 to 316 (AMSKDPSHKTT) the composition is skewed to basic and acidic residues.

It localises to the nucleus. Its function is as follows. Regulates the proliferation and differentiation of hematopoietic cells. Overexpression block the TPA-induced megakaryocytic differentiation in the K562 cell model. May also prevent cell apoptosis through the activation of the nuclear factor-kappa B (NF-kB). The protein is Hemogen (HEMGN) of Bos taurus (Bovine).